The primary structure comprises 119 residues: Protein TusC (119 aa).

It belongs to the DsrF/TusC family. As to quaternary structure, heterohexamer, formed by a dimer of trimers. The hexameric TusBCD complex contains 2 copies each of TusB, TusC and TusD. The TusBCD complex interacts with TusE.

The protein localises to the cytoplasm. Part of a sulfur-relay system required for 2-thiolation of 5-methylaminomethyl-2-thiouridine (mnm(5)s(2)U) at tRNA wobble positions. The chain is Protein TusC from Photorhabdus laumondii subsp. laumondii (strain DSM 15139 / CIP 105565 / TT01) (Photorhabdus luminescens subsp. laumondii).